A 466-amino-acid polypeptide reads, in one-letter code: Argininosuccinate lyase (466 aa).

Belongs to the lyase 1 family. Argininosuccinate lyase subfamily.

It is found in the cytoplasm. The catalysed reaction is 2-(N(omega)-L-arginino)succinate = fumarate + L-arginine. It functions in the pathway amino-acid biosynthesis; L-arginine biosynthesis; L-arginine from L-ornithine and carbamoyl phosphate: step 3/3. This Desulfovibrio desulfuricans (strain ATCC 27774 / DSM 6949 / MB) protein is Argininosuccinate lyase.